The primary structure comprises 1937 residues: Myosin-8 (1937 aa).

In terms of domain architecture, Myosin N-terminal SH3-like spans aspartate 35–proline 84. 2 positions are modified to phosphothreonine: threonine 66 and threonine 71. The 694-residue stretch at aspartate 88–aspartate 781 folds into the Myosin motor domain. Lysine 132 bears the N6,N6,N6-trimethyllysine mark. Glycine 181–threonine 188 serves as a coordination point for ATP. Tyrosine 389 carries the post-translational modification Phosphotyrosine. Phosphothreonine is present on threonine 419. Tyrosine 424 bears the Phosphotyrosine mark. Phosphoserine is present on serine 625. The segment at leucine 658–glutamate 680 is actin-binding. Histidine 756 is subject to Pros-methylhistidine. Residues lysine 760–glycine 774 form an actin-binding region. The IQ domain occupies aspartate 781–serine 813. The stretch at leucine 842–glutamate 1937 forms a coiled coil. Phosphoserine occurs at positions 1091 and 1095. Residues isoleucine 1125–glutamate 1171 are disordered. The span at alanine 1127–glutamate 1155 shows a compositional bias: basic and acidic residues. Serine 1161 and serine 1236 each carry phosphoserine. The residue at position 1254 (threonine 1254) is a Phosphothreonine. A Phosphoserine modification is found at serine 1260. Threonine 1285 carries the post-translational modification Phosphothreonine. 3 positions are modified to phosphoserine: serine 1291, serine 1302, and serine 1305. At tyrosine 1463 the chain carries Phosphotyrosine. At threonine 1466 the chain carries Phosphothreonine. Tyrosine 1491 carries the post-translational modification Phosphotyrosine. Phosphoserine is present on serine 1494. A Phosphothreonine modification is found at threonine 1500. The residue at position 1513 (serine 1513) is a Phosphoserine. At threonine 1516 the chain carries Phosphothreonine. 5 positions are modified to phosphoserine: serine 1553, serine 1573, serine 1602, serine 1713, and serine 1725. Threonine 1729 is subject to Phosphothreonine. Serine 1738 carries the post-translational modification Phosphoserine.

It belongs to the TRAFAC class myosin-kinesin ATPase superfamily. Myosin family. In terms of assembly, muscle myosin is a hexameric protein that consists of 2 heavy chain subunits (MHC), 2 alkali light chain subunits (MLC) and 2 regulatory light chain subunits (MLC-2).

Its subcellular location is the cytoplasm. It is found in the myofibril. Muscle contraction. This Mus musculus (Mouse) protein is Myosin-8 (Myh8).